The chain runs to 142 residues: MAVKIKLKRLGKIRSPHYRIVVADSRTRRDGRAIEEIGLYHPVQNPSRMEVDAERVAYWLGVGAQPTEPVLAILKKTGDWQKFKGEPAPAPLLVAAPKATRPSFDALGGDDAGKGEAITQKKKAEKKDEAAAESSSSESTEA.

Residues 101–142 (RPSFDALGGDDAGKGEAITQKKKAEKKDEAAAESSSSESTEA) are disordered. The span at 132-142 (AESSSSESTEA) shows a compositional bias: low complexity.

The protein belongs to the bacterial ribosomal protein bS16 family.

This is Small ribosomal subunit protein bS16 from Streptomyces avermitilis (strain ATCC 31267 / DSM 46492 / JCM 5070 / NBRC 14893 / NCIMB 12804 / NRRL 8165 / MA-4680).